The chain runs to 339 residues: Phenylalanine--tRNA ligase alpha subunit (339 aa).

A Mg(2+)-binding site is contributed by Glu-254.

This sequence belongs to the class-II aminoacyl-tRNA synthetase family. Phe-tRNA synthetase alpha subunit type 1 subfamily. In terms of assembly, tetramer of two alpha and two beta subunits. Requires Mg(2+) as cofactor.

It is found in the cytoplasm. The enzyme catalyses tRNA(Phe) + L-phenylalanine + ATP = L-phenylalanyl-tRNA(Phe) + AMP + diphosphate + H(+). In Caldanaerobacter subterraneus subsp. tengcongensis (strain DSM 15242 / JCM 11007 / NBRC 100824 / MB4) (Thermoanaerobacter tengcongensis), this protein is Phenylalanine--tRNA ligase alpha subunit.